A 124-amino-acid chain; its full sequence is Putative C(50) carotenoid beta-cyclase subunit A (124 aa).

The next 3 membrane-spanning stretches (helical) occupy residues 1–21 (MIGL…LVID), 34–54 (AAAL…VLGV), and 78–98 (FEEV…AAGV).

Belongs to the lycopene beta-cyclase family. As to quaternary structure, may form a complex with LbtBC.

The protein localises to the cell membrane. The protein operates within carotenoid biosynthesis. Its function is as follows. Involved in the biosynthesis of C(50) beta-cyclic carotenoids. May have C(50) carotenoid beta-cyclase activity and produce the C(50) beta-cyclic carotenoid C.p.450 from the C(50) carotenoid dihydrobisanhydrobacterioruberin (DH-BABR). The protein is Putative C(50) carotenoid beta-cyclase subunit A of Dietzia sp. (strain CQ4).